Reading from the N-terminus, the 348-residue chain is PDZ and LIM domain protein 2 (348 aa).

Residues 1-84 enclose the PDZ domain; sequence MALTVDVVGP…PLRLQLDRPQ (84 aa). The interval 67-139 is disordered; it reads SKIRQSPSPL…PPTSPQAPTG (73 aa). Residues 103–118 are compositionally biased toward polar residues; the sequence is RFQSSRRTHTDSQASL. Phosphoserine occurs at positions 117, 119, and 124. 2 positions are modified to phosphothreonine: Thr-128 and Thr-132. Residues Ser-133, Ser-153, Ser-191, Ser-197, Ser-198, Ser-202, Ser-209, and Ser-262 each carry the phosphoserine modification. Residues 165–202 form a disordered region; the sequence is GGRRGSRQASLSPAGDSAVLVLPPPPSPGARSSSSRLS. Low complexity predominate over residues 193-202; the sequence is GARSSSSRLS. The interval 249–275 is disordered; it reads ERGGTPAYLPSSLSPQSSLPTSRALAS. A compositionally biased stretch (low complexity) spans 257–270; it reads LPSSLSPQSSLPTS. The 61-residue stretch at 280 to 340 folds into the LIM zinc-binding domain; that stretch reads HTCEKCNTSI…EKHARQRYSA (61 aa).

In terms of assembly, interacts with alpha-actinins ACTN1 and ACTN4, FLNA and MYH9. Interacts (via LIM zinc-binding domain) with MKRN2.

Its subcellular location is the cytoplasm. The protein resides in the cytoskeleton. Functionally, probable adapter protein located at the actin cytoskeleton that promotes cell attachment. Necessary for the migratory capacity of epithelial cells. Overexpression enhances cell adhesion to collagen and fibronectin and suppresses anchorage independent growth. May contribute to tumor cell migratory capacity. This is PDZ and LIM domain protein 2 (PDLIM2) from Bos taurus (Bovine).